The primary structure comprises 279 residues: Homeobox protein BarH-like 2 (279 aa).

2 disordered regions span residues 110-137 (APGG…RRSR) and 194-279 (KGGQ…PPLS). Over residues 118–128 (SSESETEQPTP) the composition is skewed to polar residues. A DNA-binding region (homeobox) is located at residues 133–192 (PRRSRTIFTELQLMGLEKKFQKQKYLSTPDRLDLAQSLGLTQLQVKTWYQNRRMKWKKMV). Over residues 225–240 (NSQAQGQEQLEPSQGQ) the composition is skewed to polar residues. Positions 261–279 (PPDPPQELPIPSSEPPPLS) are enriched in pro residues.

It belongs to the BAR homeobox family. In terms of tissue distribution, highly expressed in adult salivary gland and at much lower levels in mammary gland, kidney and placenta.

The protein localises to the nucleus. Transcription factor. Binds optimally to the DNA consensus sequence 5'-YYTAATGRTTTTY-3'. May control the expression of neural adhesion molecules such as L1 or Ng-CAM during embryonic development of both the central and peripherical nervous system. May be involved in controlling adhesive processes in keratinizing epithelia. In Homo sapiens (Human), this protein is Homeobox protein BarH-like 2 (BARX2).